A 348-amino-acid polypeptide reads, in one-letter code: Dihydroorotase (348 aa).

Residues H17 and H19 each coordinate Zn(2+). Substrate contacts are provided by residues 19–21 (HLR) and N45. Zn(2+)-binding residues include K103, H140, and H178. An N6-carboxylysine modification is found at K103. H140 provides a ligand contact to substrate. L223 provides a ligand contact to substrate. D251 is a Zn(2+) binding site. D251 is a catalytic residue. Substrate contacts are provided by H255 and A267.

This sequence belongs to the metallo-dependent hydrolases superfamily. DHOase family. Class II DHOase subfamily. In terms of assembly, homodimer. Zn(2+) serves as cofactor.

The catalysed reaction is (S)-dihydroorotate + H2O = N-carbamoyl-L-aspartate + H(+). It participates in pyrimidine metabolism; UMP biosynthesis via de novo pathway; (S)-dihydroorotate from bicarbonate: step 3/3. Functionally, catalyzes the reversible cyclization of carbamoyl aspartate to dihydroorotate. The chain is Dihydroorotase from Yersinia enterocolitica serotype O:8 / biotype 1B (strain NCTC 13174 / 8081).